Reading from the N-terminus, the 76-residue chain is Adipogenesis regulatory factor (76 aa).

In terms of tissue distribution, expressed in adipose tissue (at protein level). Highly expressed in omental and subcutaneous adipose tissues. Expressed in heart, cornea, liver, kidney and spleen.

It is found in the nucleus. Functionally, plays a role in fat cell development; promotes adipogenic differentiation and stimulates transcription initiation of master adipogenesis factors like PPARG and CEBPA at early stages of preadipocyte differentiation. Its overexpression confers resistance to the anticancer chemotherapeutic drug cisplatin. This is Adipogenesis regulatory factor (ADIRF) from Homo sapiens (Human).